The sequence spans 350 residues: MFLMKPVCVLLVTCVLHRSHAWSVNNFLMTGPKAYLVYSSSVAAGAQSGIEECKYQFAWDRWNCPERALQLSSHGGLRSANRETAFVHAISSAGVMYTLTRNCSLGDFDNCGCDDSRNGQLGGQGWLWGGCSDNVGFGEAISKQFVDALETGQDARAAMNLHNNEAGRKAVKGTMKRTCKCHGVSGSCTTQTCWLQLPEFREVGAHLKEKYHAALKVDLLQGAGNSAAGRGAIADTFRSISTRELVHLEDSPDYCLENKTLGLLGTEGRECLRRGRALGRWERRSCRRLCGDCGLAVEERRAETVSSCNCKFHWCCAVRCEQCRRRVTKYFCSRAERPPRGAAHKPGKNS.

The N-terminal stretch at M1–A21 is a signal peptide. C53 and C64 are joined by a disulfide. N102 carries an N-linked (GlcNAc...) asparagine glycan. Cystine bridges form between C103/C111, C113/C131, C179/C193, C181/C188, C255/C293, C271/C286, C290/C332, C308/C323, C310/C320, and C315/C316. The O-palmitoleoyl serine moiety is linked to residue S185. A glycan (N-linked (GlcNAc...) asparagine) is linked at N258.

Belongs to the Wnt family. Palmitoleoylation is required for efficient binding to frizzled receptors. Depalmitoleoylation leads to Wnt signaling pathway inhibition. In terms of processing, proteolytic processing by TIKI1 and TIKI2 promotes oxidation and formation of large disulfide-bond oligomers, leading to inactivation of WNT8B.

It is found in the secreted. Its subcellular location is the extracellular space. It localises to the extracellular matrix. Functionally, ligand for members of the frizzled family of seven transmembrane receptors. May play an important role in the development and differentiation of certain forebrain structures, notably the hippocampus. The protein is Protein Wnt-8b (Wnt8b) of Mus musculus (Mouse).